The following is a 481-amino-acid chain: MESVPESVPSPNSNTPSIPPPVNSVPPFLSKTYDMVDDPLTNEVVSWSSGNNSFVVWSAPEFSKVLLPKYFKHNNFSSFVRQLNTYGFRKVDPDRWEFANEGFLRGRKQLLKSIVRRKPSHVQQNQQQTQVQSSSVGACVEVGKFGIEEEVERLKRDKNVLMQELVRLRQQQQATENQLQNVGQKVQVMEQRQQQMMSFLAKAVQSPGFLNQLVQQNNNDGNRQIPGSNKKRRLPVDEQENRGDNVANGLNRQIVRYQPSINEAAQNMLRQFLNTSTSPRYESVSNNPDSFLLGDVPSSTSVDNGNPSSRVSGVTLAEFSPNTVQSATNQVPEASLAHHPQAGLVQPNIGQSPAQGAAPADSWSPEFDLVGCETDSGECFDPIMAVLDESEGDAISPEGEGKMNELLEGVPKLPGIQDPFWEQFFSVELPAIADTDDILSGSVENNDLVLEQEPNEWTRNEQQMKYLTEQMGLLSSEAQRK.

The span at 1-16 (MESVPESVPSPNSNTP) shows a compositional bias: low complexity. Positions 1–23 (MESVPESVPSPNSNTPSIPPPVN) are disordered. Residues 25-119 (VPPFLSKTYD…LLKSIVRRKP (95 aa)) mediate DNA binding. The tract at residues 138 to 204 (ACVEVGKFGI…QMMSFLAKAV (67 aa)) is hydrophobic repeat HR-A/B. Over residues 213 to 227 (LVQQNNNDGNRQIPG) the composition is skewed to polar residues. The tract at residues 213–244 (LVQQNNNDGNRQIPGSNKKRRLPVDEQENRGD) is disordered. The Nuclear localization signal motif lies at 229 to 233 (NKKRR). Positions 234-243 (LPVDEQENRG) are enriched in basic and acidic residues. The AHA motif lies at 418–427 (DPFWEQFFSV). The Nuclear export signal motif lies at 467 to 474 (LTEQMGLL).

The protein belongs to the HSF family. Class A subfamily. Homotrimer. Binds to HSBP. Exhibits temperature-dependent phosphorylation.

Its subcellular location is the cytoplasm. The protein localises to the nucleus. In terms of biological role, transcriptional activator that specifically binds DNA sequence 5'-AGAAnnTTCT-3' known as heat shock promoter elements (HSE). This chain is Heat stress transcription factor A-1b (HSFA1B), found in Arabidopsis thaliana (Mouse-ear cress).